A 482-amino-acid polypeptide reads, in one-letter code: Glutamate--tRNA ligase 2 (482 aa).

A 'HIGH' region motif is present at residues 8-18; the sequence is PSPTGQLHIGG. The short motif at 249-253 is the 'KMSKS' region element; that stretch reads KLSKR. K252 is a binding site for ATP.

Belongs to the class-I aminoacyl-tRNA synthetase family. Glutamate--tRNA ligase type 1 subfamily. Monomer.

It localises to the cytoplasm. It catalyses the reaction tRNA(Glu) + L-glutamate + ATP = L-glutamyl-tRNA(Glu) + AMP + diphosphate. In terms of biological role, catalyzes the attachment of glutamate to tRNA(Glu) in a two-step reaction: glutamate is first activated by ATP to form Glu-AMP and then transferred to the acceptor end of tRNA(Glu). This is Glutamate--tRNA ligase 2 from Caldicellulosiruptor saccharolyticus (strain ATCC 43494 / DSM 8903 / Tp8T 6331).